Consider the following 572-residue polypeptide: DnaJ protein ERDJ3A (572 aa).

The N-terminal stretch at 1–23 (MVRTRLAISVVLVSTLLLLNVKA) is a signal peptide. Residues 27 to 91 (DPYKVLGVSK…EKRKNYDLYG (65 aa)) enclose the J domain. Residues 394–423 (ITVKNLKSAVQELGKLLEGLEKKNKKVSSK) adopt a coiled-coil conformation. Residues 419 to 439 (KVSSKSQAGQAPNESSEKIPL) form a disordered region. Residues 422–432 (SKSQAGQAPNE) are compositionally biased toward polar residues. An N-linked (GlcNAc...) asparagine glycan is attached at Asn-431.

In terms of assembly, interacts with BIP1 and BIP3. The interaction with BIP1 and BIP3 activates the ATPase enzyme activities of BIP1 and BIP3. Post-translationally, not N-glycosylated. Expressed in roots, leaves, stems, flowers, mature pollen grains and growing pollen tubes.

The protein localises to the endoplasmic reticulum lumen. Its function is as follows. Regulates protein folding in the endoplasmic reticulum (ER) lumen. Functions probably as a co-molecular chaperone that is required for normal growth of pollen tubes under high-temperature stress. This Arabidopsis thaliana (Mouse-ear cress) protein is DnaJ protein ERDJ3A (ERDJ3A).